We begin with the raw amino-acid sequence, 178 residues long: NADH-quinone oxidoreductase subunit I (178 aa).

4Fe-4S ferredoxin-type domains follow at residues 45-74 and 90-119; these read RHPD…VEAA and KVYE…LGNE. [4Fe-4S] cluster contacts are provided by C54, C57, C60, C64, C99, C102, C105, and C109.

It belongs to the complex I 23 kDa subunit family. As to quaternary structure, NDH-1 is composed of 15 different subunits. Subunits NuoA, H, J, K, L, M, N constitute the membrane sector of the complex. It depends on [4Fe-4S] cluster as a cofactor.

Its subcellular location is the cell membrane. The catalysed reaction is a quinone + NADH + 5 H(+)(in) = a quinol + NAD(+) + 4 H(+)(out). NDH-1 shuttles electrons from NADH, via FMN and iron-sulfur (Fe-S) centers, to quinones in the respiratory chain. The immediate electron acceptor for the enzyme in this species is believed to be ubiquinone. Couples the redox reaction to proton translocation (for every two electrons transferred, four hydrogen ions are translocated across the cytoplasmic membrane), and thus conserves the redox energy in a proton gradient. This is NADH-quinone oxidoreductase subunit I from Deinococcus radiodurans (strain ATCC 13939 / DSM 20539 / JCM 16871 / CCUG 27074 / LMG 4051 / NBRC 15346 / NCIMB 9279 / VKM B-1422 / R1).